We begin with the raw amino-acid sequence, 317 residues long: Beta-ketoacyl-[acyl-carrier-protein] synthase III (317 aa).

Active-site residues include C112 and H244. Residues 245–249 (QANLR) are ACP-binding. N274 is a catalytic residue.

This sequence belongs to the thiolase-like superfamily. FabH family. As to quaternary structure, homodimer.

Its subcellular location is the cytoplasm. The enzyme catalyses malonyl-[ACP] + acetyl-CoA + H(+) = 3-oxobutanoyl-[ACP] + CO2 + CoA. It functions in the pathway lipid metabolism; fatty acid biosynthesis. Its function is as follows. Catalyzes the condensation reaction of fatty acid synthesis by the addition to an acyl acceptor of two carbons from malonyl-ACP. Catalyzes the first condensation reaction which initiates fatty acid synthesis and may therefore play a role in governing the total rate of fatty acid production. Possesses both acetoacetyl-ACP synthase and acetyl transacylase activities. Its substrate specificity determines the biosynthesis of branched-chain and/or straight-chain of fatty acids. The polypeptide is Beta-ketoacyl-[acyl-carrier-protein] synthase III (Citrobacter koseri (strain ATCC BAA-895 / CDC 4225-83 / SGSC4696)).